The chain runs to 556 residues: PTS system fructose-specific EIIB'BC component (556 aa).

2 consecutive PTS EIIB type-2 domains span residues methionine 1–glycine 85 and isoleucine 106–lysine 201. The Phosphocysteine intermediate; for EIIB activity role is filled by cysteine 112. Cysteine 112 carries the phosphocysteine; by EIIA modification. The PTS EIIC type-2 domain maps to valine 224–glutamate 556. The next 10 helical transmembrane spans lie at proline 237–isoleucine 257, serine 275–alanine 295, valine 302–isoleucine 322, glycine 324–leucine 344, proline 349–isoleucine 369, valine 390–proline 410, methionine 431–isoleucine 451, phenylalanine 468–isoleucine 488, valine 490–isoleucine 510, and leucine 529–isoleucine 549.

The protein localises to the cell inner membrane. The catalysed reaction is D-fructose(out) + N(pros)-phospho-L-histidyl-[protein] = D-fructose 1-phosphate(in) + L-histidyl-[protein]. Its function is as follows. The phosphoenolpyruvate-dependent sugar phosphotransferase system (sugar PTS), a major carbohydrate active transport system, catalyzes the phosphorylation of incoming sugar substrates concomitantly with their translocation across the cell membrane. The enzyme II FruAB PTS system is involved in fructose transport. In Haemophilus influenzae (strain ATCC 51907 / DSM 11121 / KW20 / Rd), this protein is PTS system fructose-specific EIIB'BC component.